Consider the following 234-residue polypeptide: UPF0502 protein Bphy_5360 (234 aa).

Belongs to the UPF0502 family.

This is UPF0502 protein Bphy_5360 from Paraburkholderia phymatum (strain DSM 17167 / CIP 108236 / LMG 21445 / STM815) (Burkholderia phymatum).